A 150-amino-acid chain; its full sequence is Deoxyuridine 5'-triphosphate nucleotidohydrolase (150 aa).

Substrate-binding positions include Arg-69–Gly-71, Asn-82, Leu-86–Asp-88, and Lys-96.

It belongs to the dUTPase family. Mg(2+) is required as a cofactor.

The enzyme catalyses dUTP + H2O = dUMP + diphosphate + H(+). It participates in pyrimidine metabolism; dUMP biosynthesis; dUMP from dCTP (dUTP route): step 2/2. Functionally, this enzyme is involved in nucleotide metabolism: it produces dUMP, the immediate precursor of thymidine nucleotides and it decreases the intracellular concentration of dUTP so that uracil cannot be incorporated into DNA. The sequence is that of Deoxyuridine 5'-triphosphate nucleotidohydrolase from Neisseria gonorrhoeae (strain NCCP11945).